A 292-amino-acid polypeptide reads, in one-letter code: Thyroxine 5-deiodinase (292 aa).

Over V1–T30 the chain is Cytoplasmic. A helical; Signal-anchor for type II membrane protein transmembrane segment spans residues A31 to L50. The Extracellular portion of the chain corresponds to D51–V292. The active site involves U158. A non-standard amino acid (selenocysteine) is located at residue U158.

It belongs to the iodothyronine deiodinase family. Monomer. Homodimer. May undergo minor heretodimerization with DIO1 and DIO2.

It is found in the cell membrane. The protein resides in the endosome membrane. The catalysed reaction is 3,3',5'-triiodo-L-thyronine + iodide + A + H(+) = L-thyroxine + AH2. The enzyme catalyses 3,3'-diiodo-L-thyronine + iodide + A + H(+) = 3,3',5-triiodo-L-thyronine + AH2. It carries out the reaction 3-iodo-L-thyronine + iodide + A + H(+) = 3,5-diiodo-L-thyronine + AH2. It catalyses the reaction L-thyronine + iodide + A + H(+) = 3-iodo-L-thyronine + AH2. The catalysed reaction is 3',5'-diiodo-L-thyronine + iodide + A + H(+) = 3,3',5'-triiodo-L-thyronine + AH2. The enzyme catalyses 3'-iodo-L-thyronine + iodide + A + H(+) = 3,3'-diiodo-L-thyronine + AH2. It carries out the reaction 3,3',5'-triiodothyronamine + iodide + A + H(+) = 3,3',5,5'-tetraiodothyronamine + AH2. It catalyses the reaction 3',5'-diiodothyronamine + iodide + A + H(+) = 3,3',5'-triiodothyronamine + AH2. The catalysed reaction is 3,3'-diiodothyronamine + iodide + A + H(+) = 3,3',5-triiodothyronamine + AH2. The enzyme catalyses 3-iodothyronamine + iodide + A + H(+) = 3,5-diiodothyronamine + AH2. It carries out the reaction 3'-iodothyronamine + iodide + A + H(+) = 3,3'-diiodothyronamine + AH2. It catalyses the reaction thyronamine + iodide + A + H(+) = 3-iodothyronamine + AH2. Plays a crucial role in the metabolism of thyroid hormones (TH) and has specific roles in TH activation and inactivation by deiodination.Catalyzes the deiodination of L-thyroxine (T4) to 3,3',5'-triiodothyronine (rT3), 3,5,3'-triiodothyronine (T3) to 3,3'-diiodothyronine (3,3'-T2), 3,5-diiodothyronine (3,5-T2) to 3-monoiodothyronine (3-T1), rT3 to 3',5'-diiodothyronine (3',5'-T2) and 3,3'-T2 to 3'-monoiodothyronine (3'-T1) via inner-ring deiodination (IRD). Catalyzes the deiodination of 3-T1 to L-thyronine (T0) via outer-ring deiodination (ORD). Catalyzes the tyrosyl ring deiodinations of 3,3',5,5'-tetraiodothyronamine, 3,3',5'-triiodothyronamine, 3,5,3'-triiodothyronamine, 3,5-diiodothyronamine, 3,3'-diiodothyronamine and 3-iodothyronamine. In Ovis aries (Sheep), this protein is Thyroxine 5-deiodinase (DIO3).